Here is a 626-residue protein sequence, read N- to C-terminus: MQRADSEQPSKRPRCDDSPRTPSNTPSAEADWSPGLELHPDYKTWGPEQVCSFLRRGGFEEPVLLKNIRENEITGALLPCLDESRFENLGVSSLGERKKLLSYIQRLVQIHVDTMKVINDPIHGHIELHPLLVRIIDTPQFQRLRYIKQLGGGYYVFPGASHNRFEHSLGVGYLAGCLVHALGEKQPELQISERDVLCVQIAGLCHDLGHGPFSHMFDGRFIPLARPEVKWTHEQGSVMMFEHLINSNGIKPVMEQYGLIPEEDICFIKEQIVGPLESPVEDSLWPYKGRPENKSFLYEIVSNKRNGIDVDKWDYFARDCHHLGIQNNFDYKRFIKFARVCEVDNELRICARDKEVGNLYDMFHTRNSLHRRAYQHKVGNIIDTMITDAFLKADDYIEITGAGGKKYRISTAIDDMEAYTKLTDNIFLEILYSTDPKLKDAREILKQIEYRNLFKYVGETQPTGQIKIKREDYESLPKEVASAKPKVLLDVKLKAEDFIVDVINMDYGMQEKNPIDHVSFYCKTAPNRAIRITKNQVSQLLPEKFAEQLIRVYCKKVDRKSLYAARQYFVQWCADRNFTKPQDGDVIAPLITPQKKEWNDSTSVQNPTRLREASKSRVQLFKDDPM.

N-acetylmethionine is present on Met1. Residues 1–19 (MQRADSEQPSKRPRCDDSP) show a composition bias toward basic and acidic residues. The segment at 1-36 (MQRADSEQPSKRPRCDDSPRTPSNTPSAEADWSPGL) is disordered. Phosphoserine is present on Ser18. Thr21 and Thr25 each carry phosphothreonine. A phosphoserine mark is found at Ser33 and Ser93. Residues 45–110 (WGPEQVCSFL…LSYIQRLVQI (66 aa)) enclose the SAM domain. Positions 116 and 117 each coordinate GTP. Position 119 (Asn119) interacts with dATP. Asn119 serves as a coordination point for dCTP. Asn119 serves as a coordination point for dGTP. Asn119 contacts dTTP. GTP-binding residues include Asp137, Gln142, and Arg145. Residue Gln149 coordinates dATP. Gln149 contacts dCTP. DGTP-binding residues include Gln149, Leu150, Val156, and Arg164. Gln149 contributes to the dTTP binding site. Positions 156 and 164 each coordinate dATP. Val156 and Arg164 together coordinate dCTP. 2 residues coordinate dTTP: Val156 and Arg164. An HD domain is found at 164–316 (RFEHSLGVGY…GIDVDKWDYF (153 aa)). Mn(2+) is bound by residues His167, His206, and Asp207. DATP is bound by residues His210 and His215. Positions 210 and 215 each coordinate dCTP. DTTP-binding residues include His210 and His215. His233 is a catalytic residue. A Mn(2+)-binding site is contributed by Asp311. Residues Lys312, Tyr315, Asp319, Arg333, Arg352, Lys354, Asn358, and Arg366 each contribute to the dATP site. The dCTP site is built by Lys312, Tyr315, Asp319, Arg333, Arg352, and Lys354. 8 residues coordinate dGTP: Lys312, Tyr315, Asp319, Arg333, Arg352, Lys354, Asn358, and Arg366. Residues Lys312, Tyr315, Asp319, Arg333, Arg352, and Lys354 each coordinate dTTP. DCTP contacts are provided by Arg366 and Arg372. The dGTP site is built by Tyr374, Gln375, His376, and Lys377. DATP is bound by residues Gln375, His376, and Lys377. DCTP is bound by residues Gln375, His376, and Lys377. DTTP is bound by residues Gln375, His376, and Lys377. Arg451 and Lys455 together coordinate GTP. Residues Lys467, Lys469, and Lys492 each participate in a glycyl lysine isopeptide (Lys-Gly) (interchain with G-Cter in SUMO2) cross-link. Lys523 is a GTP binding site. Lys523 contacts dATP. Lys523 serves as a coordination point for dCTP. A dGTP-binding site is contributed by Lys523. Lys523 serves as a coordination point for dTTP. Residue Thr592 is modified to (Microbial infection) Phosphothreonine. Thr592 carries the post-translational modification Phosphothreonine; by CDK1. Lys622 participates in a covalent cross-link: Glycyl lysine isopeptide (Lys-Gly) (interchain with G-Cter in SUMO2).

Belongs to the SAMHD1 family. Homodimer; in absence of GTP and dNTP. Homotetramer; in GTP- and dNTP-bound form. Interacts with MRE11; leading to stimulate the exonuclease activity of MRE11. Interacts with RBBP8/CtIP. Interacts (via its C-terminus) with CD81. As to quaternary structure, (Microbial infection) Interacts with HIV-2 viral protein Vpx; promoting interaction with a E3 ubiquitin-protein ligase complex containing DCAF1, leading to subsequent ubiquitination and degradation of SAMHD1. It depends on Mn(2+) as a cofactor. In terms of processing, phosphorylation at Thr-592 by CDK1 acts as a switch to control deoxynucleoside triphosphate (dNTPase)-dependent and -independent functions. Phosphorylation at Thr-592 takes place in cycling cells: it reduces the stability of the homotetramer, impairing the dNTPase activity and subsequent ability to restrict infection by viruses. It also inhibits ability to suppress LINE-1 retrotransposon activity. In contrast, phosphorylation at Thr-592 promotes DNA end resection at stalled replication forks in response to DNA damage. Post-translationally, (Microbial infection) Phosphorylation at Thr-592 by Epstein-Barr virus kinase BGLF4 and human cytomegalovirus/HCMV UL97 leads to a reduced level of dCTPase and dTTPase activity and the loss of viral restriction. (Microbial infection) Ubiquitinated following interaction with HIV-2 viral protein Vpx; Vpx promotes interaction and with a DCX (DDB1-CUL4-X-box) E3 ubiquitin ligase, leading to proteasomal degradation. As to expression, expressed in heart, skeletal muscle, spleen, liver, small intestine, placenta, lung and peripheral blood leukocytes. No expression is seen in brain and thymus.

The protein localises to the nucleus. Its subcellular location is the chromosome. The enzyme catalyses a 2'-deoxyribonucleoside 5'-triphosphate + H2O = a 2'-deoxyribonucleoside + triphosphate + H(+). The catalysed reaction is dATP + H2O = 2'-deoxyadenosine + triphosphate + H(+). It catalyses the reaction dCTP + H2O = 2'-deoxycytidine + triphosphate + H(+). It carries out the reaction dGTP + H2O = 2'-deoxyguanosine + triphosphate + H(+). The enzyme catalyses dTTP + H2O = thymidine + triphosphate + H(+). Allosterically activated and regulated via the combined actions of GTP and dNTPs (dATP, dGTP, dTTP and dCTP): Allosteric site 1 binds GTP, while allosteric site 2 binds dNTP. Allosteric activation promotes the formation of highly active homotetramers. Phosphorylation at Thr-592 impairs homotetramerization, thereby inhibiting dNTPase activity, leading to reduced ability to restrict infection by viruses. Protein that acts both as a host restriction factor involved in defense response to virus and as a regulator of DNA end resection at stalled replication forks. Has deoxynucleoside triphosphate (dNTPase) activity, which is required to restrict infection by viruses, such as HIV-1: dNTPase activity reduces cellular dNTP levels to levels too low for retroviral reverse transcription to occur, blocking early-stage virus replication in dendritic and other myeloid cells. Likewise, suppresses LINE-1 retrotransposon activity. Not able to restrict infection by HIV-2 virus; because restriction activity is counteracted by HIV-2 viral protein Vpx. In addition to virus restriction, dNTPase activity acts as a regulator of DNA precursor pools by regulating dNTP pools. Phosphorylation at Thr-592 acts as a switch to control dNTPase-dependent and -independent functions: it inhibits dNTPase activity and ability to restrict infection by viruses, while it promotes DNA end resection at stalled replication forks. Functions during S phase at stalled DNA replication forks to promote the resection of gapped or reversed forks: acts by stimulating the exonuclease activity of MRE11, activating the ATR-CHK1 pathway and allowing the forks to restart replication. Its ability to promote degradation of nascent DNA at stalled replication forks is required to prevent induction of type I interferons, thereby preventing chronic inflammation. Ability to promote DNA end resection at stalled replication forks is independent of dNTPase activity. Enhances immunoglobulin hypermutation in B-lymphocytes by promoting transversion mutation. The polypeptide is Deoxynucleoside triphosphate triphosphohydrolase SAMHD1 (Homo sapiens (Human)).